The chain runs to 155 residues: Riboflavin kinase (155 aa).

4 residues coordinate ATP: Gly-15, Lys-21, Thr-27, and Asn-29. Mg(2+)-binding residues include Thr-27 and Asn-29. The active-site Nucleophile is the Glu-79. 3 residues coordinate ATP: Ile-82, His-84, and Tyr-91. 3 residues coordinate FMN: Arg-104, Lys-107, and Phe-109.

In terms of assembly, monomer. Directly interacts with TNFRSF1A death domain. TNFRSF1A-binding may be supported by TRADD. In the absence of TNFRSF1A, interacts with TRADD. Independently of TNFRSF1A, interacts with the NADPH oxidase subunit CYBA. The cofactor is Zn(2+). Requires Mg(2+) as cofactor. Detected in brain, placenta and urinary bladder.

It localises to the cytoplasm. It catalyses the reaction riboflavin + ATP = FMN + ADP + H(+). The protein operates within cofactor biosynthesis; FMN biosynthesis; FMN from riboflavin (ATP route): step 1/1. Catalyzes the phosphorylation of riboflavin (vitamin B2) to form flavin-mononucleotide (FMN), hence rate-limiting enzyme in the synthesis of FAD. Essential for TNF-induced reactive oxygen species (ROS) production. Through its interaction with both TNFRSF1A and CYBA, physically and functionally couples TNFRSF1A to NADPH oxidase. TNF-activation of RFK may enhance the incorporation of FAD in NADPH oxidase, a critical step for the assembly and activation of NADPH oxidase. This Homo sapiens (Human) protein is Riboflavin kinase (RFK).